The primary structure comprises 123 residues: Large ribosomal subunit protein uL18 (123 aa).

This sequence belongs to the universal ribosomal protein uL18 family. In terms of assembly, part of the 50S ribosomal subunit; part of the 5S rRNA/L5/L18/L25 subcomplex. Contacts the 5S and 23S rRNAs.

In terms of biological role, this is one of the proteins that bind and probably mediate the attachment of the 5S RNA into the large ribosomal subunit, where it forms part of the central protuberance. The protein is Large ribosomal subunit protein uL18 of Bifidobacterium longum (strain DJO10A).